A 284-amino-acid chain; its full sequence is tRNA (guanine-N(7)-)-methyltransferase (284 aa).

Residues Gly-102, 125-126, 160-161, and Cys-180 each bind S-adenosyl-L-methionine; these read EI and NT. Asp-183 is an active-site residue. 258–260 serves as a coordination point for S-adenosyl-L-methionine; it reads TEE.

This sequence belongs to the class I-like SAM-binding methyltransferase superfamily. TrmB family. Forms a complex with TRM82.

Its subcellular location is the nucleus. It catalyses the reaction guanosine(46) in tRNA + S-adenosyl-L-methionine = N(7)-methylguanosine(46) in tRNA + S-adenosyl-L-homocysteine. The protein operates within tRNA modification; N(7)-methylguanine-tRNA biosynthesis. Functionally, catalyzes the formation of N(7)-methylguanine at position 46 (m7G46) in tRNA. This chain is tRNA (guanine-N(7)-)-methyltransferase, found in Podospora anserina (strain S / ATCC MYA-4624 / DSM 980 / FGSC 10383) (Pleurage anserina).